Reading from the N-terminus, the 490-residue chain is Sporulation-specific protein 1 (490 aa).

One can recognise a Protein kinase domain in the interval Y18–V272. Residues I24–V32 and K47 contribute to the ATP site. Residue D141 is the Proton acceptor of the active site.

Belongs to the protein kinase superfamily. STE Ser/Thr protein kinase family. STE20 subfamily.

The protein localises to the nucleus. It is found in the cytoplasm. The catalysed reaction is L-seryl-[protein] + ATP = O-phospho-L-seryl-[protein] + ADP + H(+). The enzyme catalyses L-threonyl-[protein] + ATP = O-phospho-L-threonyl-[protein] + ADP + H(+). Its function is as follows. Serine/threonine protein kinase required for spore wall development. The polypeptide is Sporulation-specific protein 1 (SPS1) (Saccharomyces cerevisiae (strain ATCC 204508 / S288c) (Baker's yeast)).